The following is a 187-amino-acid chain: UPF0301 protein Cpar_0662 (187 aa).

This sequence belongs to the UPF0301 (AlgH) family.

This chain is UPF0301 protein Cpar_0662, found in Chlorobaculum parvum (strain DSM 263 / NCIMB 8327) (Chlorobium vibrioforme subsp. thiosulfatophilum).